The chain runs to 610 residues: Glucoamylase ARB_02327-1 (610 aa).

Positions 1 to 18 (MRVTSLLWSSLVIPAAVG) are cleaved as a signal peptide. The propeptide occupies 19-24 (FQVRFK). N-linked (GlcNAc...) asparagine glycosylation is present at Asn-49. A substrate-binding site is contributed by Trp-143. Asn-194 is a glycosylation site (N-linked (GlcNAc...) asparagine). Asp-199 (proton acceptor) is an active-site residue. Catalysis depends on Glu-202, which acts as the Proton donor. Intrachain disulfides connect Cys-233/Cys-236, Cys-245/Cys-472, and Cys-285/Cys-293. The region spanning 504–610 (TALPTKNNVR…SGAIKRDTWR (107 aa)) is the CBM20 domain.

This sequence belongs to the glycosyl hydrolase 15 family.

The protein resides in the secreted. It catalyses the reaction Hydrolysis of terminal (1-&gt;4)-linked alpha-D-glucose residues successively from non-reducing ends of the chains with release of beta-D-glucose.. In Arthroderma benhamiae (strain ATCC MYA-4681 / CBS 112371) (Trichophyton mentagrophytes), this protein is Glucoamylase ARB_02327-1.